We begin with the raw amino-acid sequence, 173 residues long: Endoribonuclease YbeY (173 aa).

Zn(2+) contacts are provided by H126, H130, and H136.

The protein belongs to the endoribonuclease YbeY family. Requires Zn(2+) as cofactor.

It is found in the cytoplasm. Its function is as follows. Single strand-specific metallo-endoribonuclease involved in late-stage 70S ribosome quality control and in maturation of the 3' terminus of the 16S rRNA. In Sinorhizobium fredii (strain NBRC 101917 / NGR234), this protein is Endoribonuclease YbeY.